The primary structure comprises 507 residues: Glycerol kinase (507 aa).

T14 is an ADP binding site. ATP-binding residues include T14, T15, and S16. Sn-glycerol 3-phosphate is bound at residue T14. Residue R18 participates in ADP binding. Positions 84, 85, 136, and 246 each coordinate sn-glycerol 3-phosphate. Glycerol-binding residues include R84, E85, Y136, D246, and Q247. ADP is bound by residues T268 and G311. ATP contacts are provided by T268, G311, Q315, and G412. 2 residues coordinate ADP: G412 and N416.

The protein belongs to the FGGY kinase family.

It carries out the reaction glycerol + ATP = sn-glycerol 3-phosphate + ADP + H(+). It functions in the pathway polyol metabolism; glycerol degradation via glycerol kinase pathway; sn-glycerol 3-phosphate from glycerol: step 1/1. Its activity is regulated as follows. Inhibited by fructose 1,6-bisphosphate (FBP). Its function is as follows. Key enzyme in the regulation of glycerol uptake and metabolism. Catalyzes the phosphorylation of glycerol to yield sn-glycerol 3-phosphate. The polypeptide is Glycerol kinase (Vibrio atlanticus (strain LGP32) (Vibrio splendidus (strain Mel32))).